Consider the following 154-residue polypeptide: MPTDLPYAAEAESSLSPDELEVLRRQYYREIEQGHVTIQSKFNYGWGLIKSPSPELETEGVKLLQEIYSASPDHRRECTYYIAVGYYKLRNYAYARKFNNLLLSVEPGNMQAQSLSTLIENAVKRDGLVGIGMITGAVAVVGLIAGSVWKRSRR.

The Cytoplasmic segment spans residues M1–G127. The stretch at R76–N109 is one TPR repeat. Residues L128–V148 form a helical membrane-spanning segment. At W149–R154 the chain is on the mitochondrial intermembrane side.

The protein belongs to the FIS1 family.

It is found in the mitochondrion outer membrane. Functionally, has a role in mitochondrial fission. Has a role in outer membrane fission but not matrix separation. This Cryptococcus neoformans var. neoformans serotype D (strain B-3501A) (Filobasidiella neoformans) protein is Mitochondrial fission 1 protein (FIS1).